Reading from the N-terminus, the 603-residue chain is Sulfite reductase [NADPH] flavoprotein alpha-component (603 aa).

The Flavodoxin-like domain occupies 64–202 (ITLISASQTG…QAETWRAAIV (139 aa)). FMN contacts are provided by residues 70–75 (SQTGNA), 117–120 (STQG), and 153–162 (LGDSSYEHFA). The FAD-binding FR-type domain occupies 236 to 452 (EAPLTAHLAL…IEHNDNFRLP (217 aa)). Residues Thr-326, Leu-360, 390–393 (RLYS), 408–410 (TVG), Tyr-414, and 423–426 (GGAS) contribute to the FAD site. NADP(+) contacts are provided by residues 523-524 (SR), 529-533 (KIYVQ), and Asp-565. An FAD-binding site is contributed by Tyr-603.

It belongs to the NADPH-dependent sulphite reductase flavoprotein subunit CysJ family. In the N-terminal section; belongs to the flavodoxin family. This sequence in the C-terminal section; belongs to the flavoprotein pyridine nucleotide cytochrome reductase family. Alpha(8)-beta(8). The alpha component is a flavoprotein, the beta component is a hemoprotein. FAD serves as cofactor. It depends on FMN as a cofactor.

The catalysed reaction is hydrogen sulfide + 3 NADP(+) + 3 H2O = sulfite + 3 NADPH + 4 H(+). Its pathway is sulfur metabolism; hydrogen sulfide biosynthesis; hydrogen sulfide from sulfite (NADPH route): step 1/1. Its function is as follows. Component of the sulfite reductase complex that catalyzes the 6-electron reduction of sulfite to sulfide. This is one of several activities required for the biosynthesis of L-cysteine from sulfate. The flavoprotein component catalyzes the electron flow from NADPH -&gt; FAD -&gt; FMN to the hemoprotein component. The polypeptide is Sulfite reductase [NADPH] flavoprotein alpha-component (Sodalis glossinidius (strain morsitans)).